Reading from the N-terminus, the 112-residue chain is Divalent-cation tolerance protein CutA (112 aa).

Cys-16, His-83, and His-84 together coordinate Cu cation.

This sequence belongs to the CutA family. In terms of assembly, homotrimer. It depends on Cu cation as a cofactor.

The protein resides in the cytoplasm. Functionally, involved in resistance toward heavy metals. This Escherichia coli O81 (strain ED1a) protein is Divalent-cation tolerance protein CutA.